The sequence spans 234 residues: NAD-dependent protein deacylase (234 aa).

In terms of domain architecture, Deacetylase sirtuin-type spans 1–234; it reads MKNLVILSGA…IEMASQEMLK (234 aa). 9–28 contributes to the NAD(+) binding site; that stretch reads GAGISAESGIKTFRDAGGLW. Residues Y53 and R56 each contribute to the substrate site. 86-89 serves as a coordination point for NAD(+); it reads QNVD. H104 functions as the Proton acceptor in the catalytic mechanism. NAD(+)-binding positions include 169-171 and M217; that span reads GTS.

It belongs to the sirtuin family. Class III subfamily.

It localises to the cytoplasm. It carries out the reaction N(6)-acetyl-L-lysyl-[protein] + NAD(+) + H2O = 2''-O-acetyl-ADP-D-ribose + nicotinamide + L-lysyl-[protein]. It catalyses the reaction N(6)-succinyl-L-lysyl-[protein] + NAD(+) + H2O = 2''-O-succinyl-ADP-D-ribose + nicotinamide + L-lysyl-[protein]. Its function is as follows. NAD-dependent lysine deacetylase and desuccinylase that specifically removes acetyl and succinyl groups on target proteins. Modulates the activities of several proteins which are inactive in their acylated form. This Helicobacter pylori (strain J99 / ATCC 700824) (Campylobacter pylori J99) protein is NAD-dependent protein deacylase.